A 39-amino-acid polypeptide reads, in one-letter code: MERNTNPNNLPVELNRTSLYLGLLFVFVTGVLMSSYFFN.

The chain crosses the membrane as a helical span at residues 18 to 38 (SLYLGLLFVFVTGVLMSSYFF).

This sequence belongs to the PsbL family. PSII is composed of 1 copy each of membrane proteins PsbA, PsbB, PsbC, PsbD, PsbE, PsbF, PsbH, PsbI, PsbJ, PsbK, PsbL, PsbM, PsbT, PsbX, PsbY, PsbZ, Psb30/Ycf12, peripheral proteins PsbO, CyanoQ (PsbQ), PsbU, PsbV and a large number of cofactors. It forms dimeric complexes.

It is found in the cellular thylakoid membrane. In terms of biological role, one of the components of the core complex of photosystem II (PSII). PSII is a light-driven water:plastoquinone oxidoreductase that uses light energy to abstract electrons from H(2)O, generating O(2) and a proton gradient subsequently used for ATP formation. It consists of a core antenna complex that captures photons, and an electron transfer chain that converts photonic excitation into a charge separation. This subunit is found at the monomer-monomer interface and is required for correct PSII assembly and/or dimerization. The sequence is that of Photosystem II reaction center protein L from Synechococcus sp. (strain CC9902).